Here is a 289-residue protein sequence, read N- to C-terminus: Oxygen-dependent coproporphyrinogen-III oxidase (289 aa).

Substrate is bound at residue Ser-82. His-86 and His-96 together coordinate a divalent metal cation. The active-site Proton donor is the His-96. Residue 98–100 (NYR) participates in substrate binding. A divalent metal cation-binding residues include His-130 and His-160. The interval 224-259 (YVEFNLVWDRGTIFGLQTNGRIESILMSMPPLVRWE) is important for dimerization.

The protein belongs to the aerobic coproporphyrinogen-III oxidase family. As to quaternary structure, homodimer. It depends on a divalent metal cation as a cofactor.

The protein localises to the cytoplasm. The catalysed reaction is coproporphyrinogen III + O2 + 2 H(+) = protoporphyrinogen IX + 2 CO2 + 2 H2O. It participates in porphyrin-containing compound metabolism; protoporphyrin-IX biosynthesis; protoporphyrinogen-IX from coproporphyrinogen-III (O2 route): step 1/1. Its function is as follows. Involved in the heme and chlorophyll biosynthesis. Catalyzes the aerobic oxidative decarboxylation of propionate groups of rings A and B of coproporphyrinogen-III to yield the vinyl groups in protoporphyrinogen-IX. In Gloeobacter violaceus (strain ATCC 29082 / PCC 7421), this protein is Oxygen-dependent coproporphyrinogen-III oxidase.